A 48-amino-acid chain; its full sequence is uncharacterized protein (48 aa).

The helical transmembrane segment at 25–47 (TFASIGVTVGVQIVILLIWGLSW) threads the bilayer.

The protein localises to the membrane. This is an uncharacterized protein from Archaeoglobus fulgidus (strain ATCC 49558 / DSM 4304 / JCM 9628 / NBRC 100126 / VC-16).